The following is a 448-amino-acid chain: Ribosomal protein uS12 methylthiotransferase RimO (448 aa).

The 111-residue stretch at 16 to 126 folds into the MTTase N-terminal domain; it reads PRISFVSLGC…VVAAVHEAVP (111 aa). Residues Cys-25, Cys-61, Cys-90, Cys-157, Cys-161, and Cys-164 each coordinate [4Fe-4S] cluster. The region spanning 143-380 is the Radical SAM core domain; that stretch reads LTPRHYAYLK…MEAQAGVSLK (238 aa). Residues 383 to 448 enclose the TRAM domain; that stretch reads RAKVGKRLQV…DAYDLHGIAV (66 aa).

The protein belongs to the methylthiotransferase family. RimO subfamily. The cofactor is [4Fe-4S] cluster.

It is found in the cytoplasm. It carries out the reaction L-aspartate(89)-[ribosomal protein uS12]-hydrogen + (sulfur carrier)-SH + AH2 + 2 S-adenosyl-L-methionine = 3-methylsulfanyl-L-aspartate(89)-[ribosomal protein uS12]-hydrogen + (sulfur carrier)-H + 5'-deoxyadenosine + L-methionine + A + S-adenosyl-L-homocysteine + 2 H(+). Functionally, catalyzes the methylthiolation of an aspartic acid residue of ribosomal protein uS12. The sequence is that of Ribosomal protein uS12 methylthiotransferase RimO from Methylorubrum populi (strain ATCC BAA-705 / NCIMB 13946 / BJ001) (Methylobacterium populi).